The primary structure comprises 352 residues: Holliday junction branch migration complex subunit RuvB (352 aa).

The large ATPase domain (RuvB-L) stretch occupies residues 5 to 191; that stretch reads TDDFSEQRVI…FGIVARLEFY (187 aa). Residues Leu30, Arg31, Gly72, Lys75, Thr76, Thr77, 138 to 140, Arg181, Tyr191, and Arg228 each bind ATP; that span reads EDY. Thr76 contacts Mg(2+). Positions 192-262 are small ATPAse domain (RuvB-S); the sequence is TPLELTRIVT…MADAALVMLD (71 aa). The tract at residues 265-352 is head domain (RuvB-H); that stretch reads PVGFDVMDRK…GPNGELWGGQ (88 aa). The DNA site is built by Arg301, Arg320, and Arg325.

It belongs to the RuvB family. In terms of assembly, homohexamer. Forms an RuvA(8)-RuvB(12)-Holliday junction (HJ) complex. HJ DNA is sandwiched between 2 RuvA tetramers; dsDNA enters through RuvA and exits via RuvB. An RuvB hexamer assembles on each DNA strand where it exits the tetramer. Each RuvB hexamer is contacted by two RuvA subunits (via domain III) on 2 adjacent RuvB subunits; this complex drives branch migration. In the full resolvosome a probable DNA-RuvA(4)-RuvB(12)-RuvC(2) complex forms which resolves the HJ.

It localises to the cytoplasm. The enzyme catalyses ATP + H2O = ADP + phosphate + H(+). Functionally, the RuvA-RuvB-RuvC complex processes Holliday junction (HJ) DNA during genetic recombination and DNA repair, while the RuvA-RuvB complex plays an important role in the rescue of blocked DNA replication forks via replication fork reversal (RFR). RuvA specifically binds to HJ cruciform DNA, conferring on it an open structure. The RuvB hexamer acts as an ATP-dependent pump, pulling dsDNA into and through the RuvAB complex. RuvB forms 2 homohexamers on either side of HJ DNA bound by 1 or 2 RuvA tetramers; 4 subunits per hexamer contact DNA at a time. Coordinated motions by a converter formed by DNA-disengaged RuvB subunits stimulates ATP hydrolysis and nucleotide exchange. Immobilization of the converter enables RuvB to convert the ATP-contained energy into a lever motion, pulling 2 nucleotides of DNA out of the RuvA tetramer per ATP hydrolyzed, thus driving DNA branch migration. The RuvB motors rotate together with the DNA substrate, which together with the progressing nucleotide cycle form the mechanistic basis for DNA recombination by continuous HJ branch migration. Branch migration allows RuvC to scan DNA until it finds its consensus sequence, where it cleaves and resolves cruciform DNA. The sequence is that of Holliday junction branch migration complex subunit RuvB from Herminiimonas arsenicoxydans.